The sequence spans 4568 residues: Dynein heavy chain, cytoplasmic (4568 aa).

Residues 1-1826 (MDSGNESSII…VVKMANSQFF (1826 aa)) are stem. Coiled-coil stretches lie at residues 587–652 (QTRL…VLGK), 814–844 (KLAE…NVLK), 1241–1274 (QEAL…LDLS), 1324–1340 (RKIR…LKQL), and 1559–1591 (VNMQ…RERS). AAA regions lie at residues 1827–2049 (YGFE…VLVS), 2118–2394 (QQLS…PTPQ), 2498–2747 (EIES…WVRG), and 2842–3111 (GFYE…GHRV). Residues 1865–1872 (GPAGTGKT), 2163–2170 (GSSGSGKT), 2537–2544 (GPPGSGKT), and 2880–2887 (GTAGAGKT) contribute to the ATP site. 3 coiled-coil regions span residues 3132 to 3229 (EKRS…AQVE), 3339 to 3432 (ARAQ…RDRW), and 3707 to 3739 (NSVI…EVDA). Residues 3132-3432 (EKRSDLEEEK…SSLRSERDRW (301 aa)) are stalk. AAA regions lie at residues 3496–3725 (LSTV…EVAQ) and 3954–4169 (AHRV…TLDA). Residues 4359–4386 (QLLKDIRRDLNEISAVCRAEKKQNNETR) are a coiled coil.

It belongs to the dynein heavy chain family. As to quaternary structure, consists of at least two heavy chains and a number of intermediate and light chains.

Its subcellular location is the cytoplasm. The protein localises to the cytoskeleton. Functionally, cytoplasmic dynein acts as a motor for the intracellular retrograde motility of vesicles and organelles along microtubules. Dynein has ATPase activity; the force-producing power stroke is thought to occur on release of ADP. May play a role in nuclear migration in hypodermal precursor cells. May be involved in the transport of synaptic vesicle components towards the axon of the DA motor neuron. This function may involve the regulation of dynein by pct-1 and/or cdk-5. Involved in the formation of synapses in the dorsal region during synaptic remodeling of DD motor neurons. Required for anterograde trafficking of dense-core vesicles in the DB motor neuron dendrites. Required for the formation of dendritic branches of PVD sensory neurons. May also play a role in GABAergic synaptic vesicle localization in the ventral nerve cord. May play a role in the pairing of homologous chromosomes during meiosis. This chain is Dynein heavy chain, cytoplasmic, found in Caenorhabditis elegans.